We begin with the raw amino-acid sequence, 155 residues long: Endoribonuclease YbeY (155 aa).

Zn(2+) is bound by residues H114, H118, and H124.

It belongs to the endoribonuclease YbeY family. Zn(2+) serves as cofactor.

The protein localises to the cytoplasm. Its function is as follows. Single strand-specific metallo-endoribonuclease involved in late-stage 70S ribosome quality control and in maturation of the 3' terminus of the 16S rRNA. This is Endoribonuclease YbeY from Cronobacter sakazakii (strain ATCC BAA-894) (Enterobacter sakazakii).